The sequence spans 232 residues: Phosphoglycolate phosphatase (232 aa).

The Nucleophile role is filled by D13. D13, D15, and D175 together coordinate Mg(2+).

Belongs to the HAD-like hydrolase superfamily. CbbY/CbbZ/Gph/YieH family. Monomer. Mg(2+) serves as cofactor. The cofactor is chloride.

The enzyme catalyses 2-phosphoglycolate + H2O = glycolate + phosphate. It participates in organic acid metabolism; glycolate biosynthesis; glycolate from 2-phosphoglycolate: step 1/1. Functionally, specifically catalyzes the dephosphorylation of 2-phosphoglycolate. Is involved in the dissimilation of the intracellular 2-phosphoglycolate formed during the DNA repair of 3'-phosphoglycolate ends, a major class of DNA lesions induced by oxidative stress. The protein is Phosphoglycolate phosphatase of Yersinia pestis.